The primary structure comprises 235 residues: Small ribosomal subunit protein eS4 (235 aa).

Positions 43–114 (IPLLLIVRDM…DPHRFLRLIE (72 aa)) constitute an S4 RNA-binding domain.

The protein belongs to the eukaryotic ribosomal protein eS4 family.

The polypeptide is Small ribosomal subunit protein eS4 (Korarchaeum cryptofilum (strain OPF8)).